We begin with the raw amino-acid sequence, 366 residues long: UPF0329 protein ECU01_0130/ECU01_1480/ECU08_0060 (366 aa).

The disordered stretch occupies residues 325–366 (IRKEEKRIRKEEERAKNEEELLRMVESEEGKSGEGEEGCRRG).

This sequence belongs to the UPF0329 family.

The chain is UPF0329 protein ECU01_0130/ECU01_1480/ECU08_0060 from Encephalitozoon cuniculi (strain GB-M1) (Microsporidian parasite).